We begin with the raw amino-acid sequence, 205 residues long: MDAVTPDAARIAAAINTKPSREEAEAAVRTLISWAGDDPTREGLLDTPKRVVKAYEEWFSGYDADPLKALGKTFEDVQGYDDMVMLTNIDVESHCEHHLAPIMGVAHVAYLPSKAVVGISKIARVVEIFSKRMQTQETMTAQIADALTEAMEPRGVAVLVDAKHQCMTTRGVHHPNVSTITTTFTGEFRNDRDLKDRFMRLLERA.

Zn(2+) is bound by residues Cys-95, His-98, and Cys-166.

It belongs to the GTP cyclohydrolase I family. As to quaternary structure, toroid-shaped homodecamer, composed of two pentamers of five dimers.

It catalyses the reaction GTP + H2O = 7,8-dihydroneopterin 3'-triphosphate + formate + H(+). Its pathway is cofactor biosynthesis; 7,8-dihydroneopterin triphosphate biosynthesis; 7,8-dihydroneopterin triphosphate from GTP: step 1/1. The chain is GTP cyclohydrolase 1 from Maricaulis maris (strain MCS10) (Caulobacter maris).